Consider the following 475-residue polypeptide: Putative aldehyde dehydrogenase SERP1729 (475 aa).

201 to 207 (GDGSGVG) contacts NAD(+). Catalysis depends on residues E245 and C279.

Belongs to the aldehyde dehydrogenase family.

The catalysed reaction is an aldehyde + NAD(+) + H2O = a carboxylate + NADH + 2 H(+). This Staphylococcus epidermidis (strain ATCC 35984 / DSM 28319 / BCRC 17069 / CCUG 31568 / BM 3577 / RP62A) protein is Putative aldehyde dehydrogenase SERP1729.